Consider the following 297-residue polypeptide: Homoserine kinase (297 aa).

82–92 (PLTRGLGSSAS) is a binding site for ATP.

The protein belongs to the GHMP kinase family. Homoserine kinase subfamily.

It localises to the cytoplasm. It catalyses the reaction L-homoserine + ATP = O-phospho-L-homoserine + ADP + H(+). Its pathway is amino-acid biosynthesis; L-threonine biosynthesis; L-threonine from L-aspartate: step 4/5. In terms of biological role, catalyzes the ATP-dependent phosphorylation of L-homoserine to L-homoserine phosphate. The chain is Homoserine kinase from Bacillus cereus (strain G9842).